Here is a 186-residue protein sequence, read N- to C-terminus: Large ribosomal subunit protein uL5 (186 aa).

It belongs to the universal ribosomal protein uL5 family. As to quaternary structure, part of the 50S ribosomal subunit; part of the 5S rRNA/L5/L18/L25 subcomplex. Contacts the 5S rRNA and the P site tRNA. Forms a bridge to the 30S subunit in the 70S ribosome.

In terms of biological role, this is one of the proteins that bind and probably mediate the attachment of the 5S RNA into the large ribosomal subunit, where it forms part of the central protuberance. In the 70S ribosome it contacts protein S13 of the 30S subunit (bridge B1b), connecting the 2 subunits; this bridge is implicated in subunit movement. Contacts the P site tRNA; the 5S rRNA and some of its associated proteins might help stabilize positioning of ribosome-bound tRNAs. The polypeptide is Large ribosomal subunit protein uL5 (Cereibacter sphaeroides (strain ATCC 17029 / ATH 2.4.9) (Rhodobacter sphaeroides)).